Consider the following 171-residue polypeptide: Urease accessory protein UreE (171 aa).

The disordered stretch occupies residues 143-171 (SGGHQHHHGHDHDHGHHGHDHDHHHPDHE). The segment covering 152–171 (HDHDHGHHGHDHDHHHPDHE) has biased composition (basic and acidic residues).

It belongs to the UreE family.

It is found in the cytoplasm. Its function is as follows. Involved in urease metallocenter assembly. Binds nickel. Probably functions as a nickel donor during metallocenter assembly. The sequence is that of Urease accessory protein UreE from Brucella abortus biovar 1 (strain 9-941).